A 156-amino-acid chain; its full sequence is Protein GLUTAMINE DUMPER 4 (156 aa).

Over 1 to 39 the chain is Extracellular; that stretch reads MRPLSIKPTSLDVARHATSVESFGNHRPPISPWHSPVPY. A helical membrane pass occupies residues 40–60; that stretch reads LFGGLAAMLGLIAFALLILAC. Topologically, residues 61–156 are cytoplasmic; sequence SYWRLSTSGD…AKENEETTSQ (96 aa). The segment at 67-87 is disordered; it reads TSGDDSGERVDEEKESRSGVK. Residues 72–84 are compositionally biased toward basic and acidic residues; sequence SGERVDEEKESRS. A VIMAG motif is present at residues 99-103; that stretch reads VIMAG. Positions 136–156 are disordered; that stretch reads AGEEKMGDREKAKENEETTSQ.

This sequence belongs to the GLUTAMINE DUMPER 1 (TC 9.B.60) family. As to expression, expressed in the vascular tissues, even in the minor veins of the leaves.

It localises to the membrane. Its function is as follows. Probable subunit of an amino acid transporter involved in the regulation of the amino acid metabolism. Stimulates amino acid export by activating nonselective amino acid facilitators. This chain is Protein GLUTAMINE DUMPER 4 (GDU4), found in Arabidopsis thaliana (Mouse-ear cress).